The primary structure comprises 72 residues: Hypotensin (72 aa).

The N-terminal stretch at Met-1–Gly-24 is a signal peptide. 2 consecutive propeptides follow at residues Met-25–Arg-35 and Arg-61–Asp-72.

This sequence belongs to the non-disulfide-bridged peptide (NDBP) superfamily. As to expression, expressed by the venom gland.

The protein localises to the secreted. In terms of biological role, potentiates the hypotensive action of bradykinin (BK) in normotensive rats, and induces a vasorelaxant effect in mesenteric artery rings that is induced by endothelium-dependent release of nitric oxide (NO). Does not inhibit angiotensin converting enzyme (ACE). Shows neither hemolytic activity nor cytotoxicity to normal and cancer cells. Shows moderate antimicrobial activity against the fungi Candida albicans and the filamentous fungus Trichophyton rubrum, as well as against the bacteria C.albicans (MIC=128 ug/mL), C.tropicalis (MIC=128 ug/mL) and Aspergillus flavus (MIC=128 ug/mL). Has no antimicrobial activity against S.aureus, S.epidermidis and P.aeruginosa. This chain is Hypotensin, found in Tityus stigmurus (Brazilian scorpion).